We begin with the raw amino-acid sequence, 1964 residues long: Probable helicase with zinc finger domain (1964 aa).

A C3H1-type zinc finger spans residues 178–206; the sequence is SEEYTLCKRFLEQGICRYGAQCTSAHSQE. Ser-248 is modified (phosphoserine). 668-675 provides a ligand contact to ATP; the sequence is GPYGTGKT. Positions 794–797 match the DEAA box motif; the sequence is DEAA. Positions 1116–1127 are enriched in polar residues; that stretch reads HSGNSSRQQQSP. Residues 1116 to 1135 are disordered; that stretch reads HSGNSSRQQQSPPKVKSLYH. Position 1163 is a phosphothreonine (Thr-1163). Arg-1245 carries the omega-N-methylarginine modification. Disordered stretches follow at residues 1248 to 1350, 1360 to 1379, 1388 to 1449, 1463 to 1491, 1631 to 1655, and 1743 to 1964; these read PIPY…LPAP, HFHP…QPHT, LPEQ…QAGP, QSPA…RAIT, QVQP…QFAN, and QHAA…SYFK. Basic and acidic residues-rich tracts occupy residues 1268 to 1281 and 1292 to 1308; these read HAEK…RNGK and NKIR…KQVD. Pro residues predominate over residues 1365 to 1374; the sequence is PQLPRPPFPA. Positions 1388 to 1431 are enriched in low complexity; the sequence is LPEQPNQMAPQPNQVAPQPNQMTPQPNQVAPQPNQVVQQQSQAP. Positions 1635–1644 are enriched in pro residues; that stretch reads RSPPAVPSPP. Ser-1636, Ser-1760, Ser-1763, and Ser-1788 each carry phosphoserine. Residues 1755-1765 are compositionally biased toward polar residues; it reads SSRTVSASSLP. Polar residues-rich tracts occupy residues 1799 to 1813 and 1826 to 1849; these read PQDS…QGHS and WANT…TSQP. Basic and acidic residues predominate over residues 1860 to 1870; sequence KPPEDQLKPES. 2 stretches are compositionally biased toward polar residues: residues 1872 to 1881 and 1897 to 1910; these read EVSSSFNYSM and IAES…QSPA. Residues 1941-1956 show a composition bias toward low complexity; sequence PLSLLQELSLGSSPGS.

Belongs to the DNA2/NAM7 helicase family. In terms of assembly, interacts with POLR2A. Interacts with SMYD3; the interaction may bridge SMYD3 and RNA polymerase II. Interacts with SMYD2.

The protein localises to the nucleus. In terms of biological role, may act as a helicase that plays a role in RNA metabolism in multiple tissues and organs within the developing embryo. This is Probable helicase with zinc finger domain (Helz) from Mus musculus (Mouse).